A 273-amino-acid polypeptide reads, in one-letter code: Undecaprenyl-diphosphatase (273 aa).

Transmembrane regions (helical) follow at residues 48–68 (AANT…VVVF), 89–109 (LTLL…VLFE), 116–136 (LFST…MIVA), 152–172 (ITYK…WPGF), 193–213 (ADFT…LSLL), 222–242 (ADIP…LLAI), and 252–272 (IRLV…YFLY).

The protein belongs to the UppP family.

It is found in the cell membrane. The catalysed reaction is di-trans,octa-cis-undecaprenyl diphosphate + H2O = di-trans,octa-cis-undecaprenyl phosphate + phosphate + H(+). Its function is as follows. Catalyzes the dephosphorylation of undecaprenyl diphosphate (UPP). Confers resistance to bacitracin. The polypeptide is Undecaprenyl-diphosphatase (Geobacillus thermodenitrificans (strain NG80-2)).